We begin with the raw amino-acid sequence, 1012 residues long: Formate dehydrogenase subunit alpha (1012 aa).

Residues 1–35 constitute a signal peptide (tat-type signal); sequence MLIKRRAFLKLTAAGATLSAFGGLGVDLAPAKAQA. The 4Fe-4S Mo/W bis-MGD-type domain maps to 45–103; the sequence is AKQTTSVCCYCSVGCGLIVHTDKKTNRAINVEGDPDHPINEGSLCAKGASTWQLAENER. [4Fe-4S] cluster-binding residues include Cys52, Cys55, Cys59, and Cys89. Position 193 (Sec193) interacts with W-bis(molybdopterin guanine dinucleotide). A non-standard amino acid (selenocysteine) is located at residue Sec193. Residues Thr393, Lys395, Lys398, Leu428, and Asn430 each contribute to the Ca(2+) site. The cysteines at positions 852 and 879 are disulfide-linked.

Belongs to the prokaryotic molybdopterin-containing oxidoreductase family. As to quaternary structure, heterodimer of alpha (FdhA) and beta (FdhB) subunits. It depends on [4Fe-4S] cluster as a cofactor. Requires W-bis(molybdopterin guanine dinucleotide) as cofactor. In terms of processing, the disulfide bond is likely to be broken in the active form of this enzyme. Predicted to be exported by the Tat system. The position of the signal peptide cleavage has been experimentally proven.

It localises to the periplasm. The enzyme catalyses formate + NAD(+) = CO2 + NADH. Alpha chain of the formate dehydrogenase (FDH) catalyze the reversible two-electron oxidation of formate to carbon dioxide. FDH loses activity in the presence of air, but this activity can be restored. The alpha subunit of formate dehydrogenase forms the active site. The protein is Formate dehydrogenase subunit alpha of Megalodesulfovibrio gigas (Desulfovibrio gigas).